The primary structure comprises 422 residues: UDP-N-acetylmuramoylalanine--D-glutamate ligase (422 aa).

102-108 (GTNGKTT) lines the ATP pocket.

The protein belongs to the MurCDEF family.

It localises to the cytoplasm. It catalyses the reaction UDP-N-acetyl-alpha-D-muramoyl-L-alanine + D-glutamate + ATP = UDP-N-acetyl-alpha-D-muramoyl-L-alanyl-D-glutamate + ADP + phosphate + H(+). It functions in the pathway cell wall biogenesis; peptidoglycan biosynthesis. Its function is as follows. Cell wall formation. Catalyzes the addition of glutamate to the nucleotide precursor UDP-N-acetylmuramoyl-L-alanine (UMA). This Helicobacter pylori (strain ATCC 700392 / 26695) (Campylobacter pylori) protein is UDP-N-acetylmuramoylalanine--D-glutamate ligase.